The sequence spans 299 residues: MAELGLNEHHQNEYINYMRFARSKRGLRLKTVDSCFQDLKESRLVEETFTIDEVSEVLNGLQAVVHSEVESELINTAYTNVLLLRQLLAQAEKWYLKLQTDISELENRELLEQVAEFEKAEITSSNKKPILDITKPKLAPLNEGGTAELLNKEILRLQEENEKLKSRLKTIEIQATSALDEKSKLEKALQDLQLDQGNQKDFIKAQDLSNLENTVAALKSEFQKTLNDKTENQKSLEENLATAKHDLLRVQEQLHMAEKELEKKFQQTAAYRNMKEILTKKNDQIKDLRKRLAQYEPED.

Residues 88–296 (LAQAEKWYLK…DLRKRLAQYE (209 aa)) adopt a coiled-coil conformation. The segment at 145–299 (GTAELLNKEI…KRLAQYEPED (155 aa)) is interaction with BSS9.

It belongs to the LZTFL1 family. In terms of assembly, self-associates. Interacts with BBS9; the interaction mediates the association of LZTL1 with the BBsome complex and regulates BBSome ciliary trafficking.

Its subcellular location is the cytoplasm. Regulates ciliary localization of the BBSome complex. Together with the BBSome complex, controls SMO ciliary trafficking and contributes to the sonic hedgehog (SHH) pathway regulation. May play a role in neurite outgrowth. May have tumor suppressor function. The sequence is that of Leucine zipper transcription factor-like protein 1 (LZTFL1) from Macaca fascicularis (Crab-eating macaque).